Here is an 858-residue protein sequence, read N- to C-terminus: M-phase phosphoprotein 8 (858 aa).

The interval 18–55 (VPDSIGRSPESEGVGAGDEEKDAATKGTVAVGDSEEDG) is disordered. Residues S51, S85, S136, and S138 each carry the phosphoserine modification. One can recognise a Chromo domain in the interval 59–118 (FEVERILDMKCEGGKNLYKVRWKGYTSEDDTWEPEVHLEDCKEVLLEFRKKLAENKAKAV). The segment at 80 to 87 (WKGYTSED) is histone H3K9me3 binding. A disordered region spans residues 129-175 (NDIFEADSDSDQQSDTKEDISPRKKKKKIKCKEETSPEDLRKKRTKM). A Phosphothreonine modification is found at T144. Phosphoserine; by CDK1 is present on residues S149 and S164. Over residues 159–169 (CKEETSPEDLR) the composition is skewed to basic and acidic residues. S188 is subject to Phosphoserine. Disordered regions lie at residues 209–234 (ELKD…NKRA) and 250–300 (NRKT…DKTA). Phosphoserine occurs at positions 267, 271, and 278. Over residues 273 to 282 (ILEDDSEDFI) the composition is skewed to acidic residues. Over residues 283-300 (SDNREENQNVRSVRDKTA) the composition is skewed to basic and acidic residues. S318 is subject to Phosphoserine. The tract at residues 321–431 (EDAGTRVRRK…YDLDKEEKAR (111 aa)) is disordered. Basic and acidic residues predominate over residues 335–357 (RKFEEPKEIKKLESTNAFLERRA). Position 385 is a phosphothreonine; by CDK1 (T385). Phosphoserine is present on residues S392 and S400. The segment covering 407 to 431 (EKEKKNEPKGKYQKRYDLDKEEKAR) has biased composition (basic and acidic residues). T453 bears the Phosphothreonine mark. ANK repeat units lie at residues 598-627 (TGMT…KVNG), 631-660 (NGTT…FVNV), 664-693 (NGET…DCNI), and 697-726 (HQNS…TLSR).

Homodimer. Interacts (via chromo domain) with histone H3K9me3. Has the highest affinity for H3K9me3, and lesser affinity for H3K9me2 and H3K9me1. Component of the HUSH complex; at least composed of TASOR, PPHLN1 and MPHOSPH8. Interacts with DNMT3, EHMT1 and SETDB1. Interacts with MORC2; the interaction associateS MORC2 with the HUSH complex which recruits MORC2 to heterochromatic loci. Interacts with ZNF638; leading to recruitment of the HUSH complex to unintegrated retroviral DNA. Interacts with TASOR. Phosphorylated in M (mitotic) phase. Phosphorylation by CDK1 promotes dissociation from chromatin. In terms of tissue distribution, expressed in the spermatogonia, spermatocytes and granular cells within the cerebellum.

It is found in the nucleus. It localises to the chromosome. Heterochromatin component that specifically recognizes and binds methylated 'Lys-9' of histone H3 (H3K9me) and promotes recruitment of proteins that mediate epigenetic repression. Mediates recruitment of the HUSH complex to H3K9me3 sites: the HUSH complex is recruited to genomic loci rich in H3K9me3 and is required to maintain transcriptional silencing by promoting recruitment of SETDB1, a histone methyltransferase that mediates further deposition of H3K9me3, as well as MORC2. Binds H3K9me and promotes DNA methylation by recruiting DNMT3A to target CpG sites; these can be situated within the coding region of the gene. Mediates down-regulation of CDH1 expression. Also represses L1 retrotransposons in collaboration with MORC2 and, probably, SETDB1, the silencing is dependent of repressive epigenetic modifications, such as H3K9me3 mark. Silencing events often occur within introns of transcriptionally active genes, and lead to the down-regulation of host gene expression. The HUSH complex is also involved in the silencing of unintegrated retroviral DNA by being recruited by ZNF638: some part of the retroviral DNA formed immediately after infection remains unintegrated in the host genome and is transcriptionally repressed. The chain is M-phase phosphoprotein 8 from Mus musculus (Mouse).